The primary structure comprises 408 residues: Zinc finger protein 764 (408 aa).

Residues 26–97 (VSFADVAVYF…AAQDPEVAKC (72 aa)) enclose the KRAB domain. The tract at residues 91 to 167 (DPEVAKCQTQ…GRPSLCAHPP (77 aa)) is disordered. 7 C2H2-type zinc fingers span residues 175–197 (HGCY…VYSH), 203–225 (FHCT…RAIH), 231–253 (HRCL…LRVH), 259–281 (YGCA…RRVH), 287–309 (FPCP…VRTH), 315–337 (YPCP…RRTH), and 343–365 (YPCP…QWVH).

The protein belongs to the krueppel C2H2-type zinc-finger protein family. Interacts (via KRAB domain) with NR3C1/GR (via NR LBD domain); the interaction regulates transcription factor activity of NR3C1 by directing its actions toward certain biologic pathways.

The protein resides in the nucleus. Functionally, zinc finger protein that functions as a cofactor for steroid hormone receptors, such as NR3C1/GR. Directs NR3C1/GR transcriptional activity toward specific biologic pathways by changing NR3C1/GR binding and transcriptional activity on the glucocorticoid-responsive genes. The protein is Zinc finger protein 764 of Homo sapiens (Human).